Reading from the N-terminus, the 199-residue chain is Recombination protein RecR (199 aa).

A C4-type zinc finger spans residues 57–72 (CQSCRTYTEETLCPIC). The 96-residue stretch at 81–176 (STICVVETPA…MISRIAHGVP (96 aa)) folds into the Toprim domain.

The protein belongs to the RecR family.

In terms of biological role, may play a role in DNA repair. It seems to be involved in an RecBC-independent recombinational process of DNA repair. It may act with RecF and RecO. The protein is Recombination protein RecR of Shewanella baltica (strain OS195).